A 443-amino-acid polypeptide reads, in one-letter code: Spermidine hydroxycinnamoyltransferase 1 (443 aa).

Active-site proton acceptor residues include H167 and D390.

This sequence belongs to the plant acyltransferase family.

Functionally, hydroxycinnamoyl transferase that catalyzes the transfer of an acyl from p-coumaryol-CoA to spermidine, to produce coumaroyl spermidine. Can use feruloyl-CoA as acyl donor. Contributes to the natural variation of spermidine-based phenolamides in rice cultivars. This chain is Spermidine hydroxycinnamoyltransferase 1, found in Oryza sativa subsp. japonica (Rice).